The primary structure comprises 59 residues: UPF0434 protein lpl1884 (59 aa).

It belongs to the UPF0434 family.

In Legionella pneumophila (strain Lens), this protein is UPF0434 protein lpl1884.